A 544-amino-acid chain; its full sequence is Chaperonin GroEL 2 (544 aa).

ATP contacts are provided by residues 29–32, 86–90, Gly413, and Asp495; these read TLGP and DGTTT. The interval 525 to 544 is disordered; that stretch reads PEPKSNKPAGGGGGVDDYDY. Over residues 533–544 the composition is skewed to gly residues; the sequence is AGGGGGVDDYDY.

Belongs to the chaperonin (HSP60) family. As to quaternary structure, forms a cylinder of 14 subunits composed of two heptameric rings stacked back-to-back. Interacts with the co-chaperonin GroES.

Its subcellular location is the cytoplasm. The enzyme catalyses ATP + H2O + a folded polypeptide = ADP + phosphate + an unfolded polypeptide.. Functionally, together with its co-chaperonin GroES, plays an essential role in assisting protein folding. The GroEL-GroES system forms a nano-cage that allows encapsulation of the non-native substrate proteins and provides a physical environment optimized to promote and accelerate protein folding. The sequence is that of Chaperonin GroEL 2 from Synechococcus sp. (strain JA-3-3Ab) (Cyanobacteria bacterium Yellowstone A-Prime).